Here is a 156-residue protein sequence, read N- to C-terminus: Small ribosomal subunit protein uS7 (156 aa).

It belongs to the universal ribosomal protein uS7 family. Part of the 30S ribosomal subunit. Contacts proteins S9 and S11.

Its function is as follows. One of the primary rRNA binding proteins, it binds directly to 16S rRNA where it nucleates assembly of the head domain of the 30S subunit. Is located at the subunit interface close to the decoding center, probably blocks exit of the E-site tRNA. In Staphylococcus aureus (strain USA300), this protein is Small ribosomal subunit protein uS7.